Consider the following 120-residue polypeptide: SAGA-associated factor 11 (120 aa).

The segment covering 40 to 60 (SLLNSSNSNTNSNTNGTIASN) has biased composition (low complexity). Residues 40 to 82 (SLLNSSNSNTNSNTNGTIASNGGNGTTSDENNEIENSTIQDKS) are disordered. The segment at 93-114 (FRCLNCGRNIAGGRFASHISKC) adopts an SGF11-type zinc-finger fold.

This sequence belongs to the SGF11 family. As to quaternary structure, component of the 1.8 MDa SAGA transcription coactivator-HAT complex. SAGA is built of 5 distinct domains with specialized functions. Within the SAGA complex, SUS1, SGF11, SGF73 and UBP8 form an additional subcomplex of SAGA called the DUB module (deubiquitination module). Interacts directly with SGF73, SUS1 and UBP8.

The protein localises to the nucleus. In terms of biological role, functions as a component of the transcription regulatory histone acetylation (HAT) complex SAGA. At the promoters, SAGA is required for recruitment of the basal transcription machinery. It influences RNA polymerase II transcriptional activity through different activities such as TBP interaction and promoter selectivity, interaction with transcription activators, and chromatin modification through histone acetylation and deubiquitination. SAGA acetylates nucleosomal histone H3 to some extent (to form H3K9ac, H3K14ac, H3K18ac and H3K23ac). SAGA interacts with DNA via upstream activating sequences (UASs). Involved in transcriptional regulation of a subset of SAGA-regulated genes. Within the SAGA complex, participates in a subcomplex, that specifically deubiquitinates histones H2B. This chain is SAGA-associated factor 11, found in Candida albicans (strain SC5314 / ATCC MYA-2876) (Yeast).